Reading from the N-terminus, the 63-residue chain is Small integral membrane protein 43 (63 aa).

Important for interaction with SLC2A1 and SLC2A3 regions lie at residues 7 to 29 (LLLY…FVVI) and 51 to 57 (HREPWGF). A helical transmembrane segment spans residues 9 to 29 (LYLALFFFLLFLLFLLLFVVI).

As to quaternary structure, interacts with glucose transporters SLC2A1/GLUT1 and SLC2A3/GLUT3; the interactions may promote SLC2A1- and SLC2A3-mediated glucose transport to meet the energy needs of mesendoderm differentiation.

It is found in the cell membrane. In terms of biological role, required for mesendoderm differentiation. Interacts with glucose transporters and promotes glucose uptake. Probably augments the glucose uptake capacity of glucose transporter proteins to meet the energy needs of mesendoderm differentiation. This is Small integral membrane protein 43 from Homo sapiens (Human).